Here is a 667-residue protein sequence, read N- to C-terminus: DNA ligase (667 aa).

Residues 34–38, 83–84, and Glu-117 contribute to the NAD(+) site; these read DYEFD and SL. Lys-119 acts as the N6-AMP-lysine intermediate in catalysis. Arg-140, Glu-176, Lys-289, and Lys-313 together coordinate NAD(+). Residues Cys-407, Cys-410, Cys-425, and Cys-431 each coordinate Zn(2+). Residues 591 to 667 enclose the BRCT domain; sequence QVNRNFEGMS…ISEDEFMGMM (77 aa).

Belongs to the NAD-dependent DNA ligase family. LigA subfamily. Requires Mg(2+) as cofactor. It depends on Mn(2+) as a cofactor.

It catalyses the reaction NAD(+) + (deoxyribonucleotide)n-3'-hydroxyl + 5'-phospho-(deoxyribonucleotide)m = (deoxyribonucleotide)n+m + AMP + beta-nicotinamide D-nucleotide.. Its function is as follows. DNA ligase that catalyzes the formation of phosphodiester linkages between 5'-phosphoryl and 3'-hydroxyl groups in double-stranded DNA using NAD as a coenzyme and as the energy source for the reaction. It is essential for DNA replication and repair of damaged DNA. The chain is DNA ligase from Chlorobium chlorochromatii (strain CaD3).